The sequence spans 935 residues: uncharacterized protein (935 aa).

9 disordered regions span residues 1–32 (MDIGLITNKEDDEENDLSIKSPYSTTKNQNNN), 74–228 (NNNN…YNNG), 265–287 (NNENKKKNNDNENNNYPNFNNNN), 342–376 (NQQKHQKKIQHQENSNFEQLEKPEQLSHNSESSKT), 394–414 (SPTQQQQQQQQQQQQQQQQQY), 466–491 (KNINNNNSNNNNNNNNNNNNNNNNNI), 516–559 (PHQQ…TSTI), 727–755 (SPSSSTSSETTTSTSTTTNNTSTTTISPS), and 778–799 (GGGSSGGGGSGGGVNNNNNVQN). Over residues 74-227 (NNNNNTTNNN…NNNDDNIYNN (154 aa)) the composition is skewed to low complexity. Residues 262 to 331 (KKNNNENKKK…NNINNNNNKI (70 aa)) adopt a coiled-coil conformation. Positions 265 to 274 (NNENKKKNND) are enriched in basic and acidic residues. The segment covering 275–287 (NENNNYPNFNNNN) has biased composition (low complexity). Polar residues predominate over residues 367–376 (LSHNSESSKT). Positions 397–414 (QQQQQQQQQQQQQQQQQY) are enriched in low complexity. Residues 522 to 559 (SSPTSSSTSTSSTTSSSSSSSSSSSSSSSSSTSSTSTI) are compositionally biased toward low complexity. Residues 778 to 791 (GGGSSGGGGSGGGV) show a composition bias toward gly residues.

This is an uncharacterized protein from Dictyostelium discoideum (Social amoeba).